The sequence spans 87 residues: DNA-directed RNA polymerase subunit omega (87 aa).

It belongs to the RNA polymerase subunit omega family. The RNAP catalytic core consists of 2 alpha, 1 beta, 1 beta' and 1 omega subunit. When a sigma factor is associated with the core the holoenzyme is formed, which can initiate transcription.

The catalysed reaction is RNA(n) + a ribonucleoside 5'-triphosphate = RNA(n+1) + diphosphate. In terms of biological role, promotes RNA polymerase assembly. Latches the N- and C-terminal regions of the beta' subunit thereby facilitating its interaction with the beta and alpha subunits. In Pseudomonas fluorescens (strain Pf0-1), this protein is DNA-directed RNA polymerase subunit omega.